A 414-amino-acid chain; its full sequence is 5-aminolevulinate synthase (414 aa).

Residues arginine 22, serine 133, and lysine 152 each contribute to the substrate site. The pyridoxal 5'-phosphate site is built by serine 185, histidine 213, and threonine 241. Lysine 244 is a catalytic residue. Lysine 244 is subject to N6-(pyridoxal phosphate)lysine. 2 residues coordinate pyridoxal 5'-phosphate: threonine 273 and threonine 274. Threonine 359 contacts substrate.

It belongs to the class-II pyridoxal-phosphate-dependent aminotransferase family. As to quaternary structure, homodimer. Requires pyridoxal 5'-phosphate as cofactor.

It carries out the reaction succinyl-CoA + glycine + H(+) = 5-aminolevulinate + CO2 + CoA. It participates in porphyrin-containing compound metabolism; protoporphyrin-IX biosynthesis; 5-aminolevulinate from glycine: step 1/1. In Rickettsia conorii (strain ATCC VR-613 / Malish 7), this protein is 5-aminolevulinate synthase (hemA).